A 288-amino-acid polypeptide reads, in one-letter code: Bifunctional protein FolD (288 aa).

NADP(+) is bound at residue 166–168 (GRS).

The protein belongs to the tetrahydrofolate dehydrogenase/cyclohydrolase family. In terms of assembly, homodimer.

It carries out the reaction (6R)-5,10-methylene-5,6,7,8-tetrahydrofolate + NADP(+) = (6R)-5,10-methenyltetrahydrofolate + NADPH. The catalysed reaction is (6R)-5,10-methenyltetrahydrofolate + H2O = (6R)-10-formyltetrahydrofolate + H(+). The protein operates within one-carbon metabolism; tetrahydrofolate interconversion. In terms of biological role, catalyzes the oxidation of 5,10-methylenetetrahydrofolate to 5,10-methenyltetrahydrofolate and then the hydrolysis of 5,10-methenyltetrahydrofolate to 10-formyltetrahydrofolate. This is Bifunctional protein FolD from Levilactobacillus brevis (strain ATCC 367 / BCRC 12310 / CIP 105137 / JCM 1170 / LMG 11437 / NCIMB 947 / NCTC 947) (Lactobacillus brevis).